We begin with the raw amino-acid sequence, 403 residues long: Probable tRNA sulfurtransferase (403 aa).

A THUMP domain is found at 60–165; the sequence is QLAEERLKPI…KEGVFLSCRT (106 aa). ATP-binding positions include 183 to 184, 208 to 209, Arg-265, Gly-287, and Gln-296; these read ML and HF.

The protein belongs to the ThiI family.

It localises to the cytoplasm. The catalysed reaction is [ThiI sulfur-carrier protein]-S-sulfanyl-L-cysteine + a uridine in tRNA + 2 reduced [2Fe-2S]-[ferredoxin] + ATP + H(+) = [ThiI sulfur-carrier protein]-L-cysteine + a 4-thiouridine in tRNA + 2 oxidized [2Fe-2S]-[ferredoxin] + AMP + diphosphate. It carries out the reaction [ThiS sulfur-carrier protein]-C-terminal Gly-Gly-AMP + S-sulfanyl-L-cysteinyl-[cysteine desulfurase] + AH2 = [ThiS sulfur-carrier protein]-C-terminal-Gly-aminoethanethioate + L-cysteinyl-[cysteine desulfurase] + A + AMP + 2 H(+). It functions in the pathway cofactor biosynthesis; thiamine diphosphate biosynthesis. Functionally, catalyzes the ATP-dependent transfer of a sulfur to tRNA to produce 4-thiouridine in position 8 of tRNAs, which functions as a near-UV photosensor. Also catalyzes the transfer of sulfur to the sulfur carrier protein ThiS, forming ThiS-thiocarboxylate. This is a step in the synthesis of thiazole, in the thiamine biosynthesis pathway. The sulfur is donated as persulfide by IscS. This chain is Probable tRNA sulfurtransferase, found in Listeria monocytogenes serovar 1/2a (strain ATCC BAA-679 / EGD-e).